A 396-amino-acid chain; its full sequence is CCA-adding enzyme (396 aa).

Glycine 27 and arginine 30 together coordinate ATP. 2 residues coordinate CTP: glycine 27 and arginine 30. Residues aspartate 40 and aspartate 42 each coordinate Mg(2+). Positions 111, 154, 157, 160, and 163 each coordinate ATP. CTP-binding residues include arginine 111, aspartate 154, arginine 157, arginine 160, and arginine 163.

This sequence belongs to the tRNA nucleotidyltransferase/poly(A) polymerase family. Bacterial CCA-adding enzyme type 3 subfamily. In terms of assembly, homodimer. Mg(2+) serves as cofactor.

The catalysed reaction is a tRNA precursor + 2 CTP + ATP = a tRNA with a 3' CCA end + 3 diphosphate. It carries out the reaction a tRNA with a 3' CCA end + 2 CTP + ATP = a tRNA with a 3' CCACCA end + 3 diphosphate. In terms of biological role, catalyzes the addition and repair of the essential 3'-terminal CCA sequence in tRNAs without using a nucleic acid template. Adds these three nucleotides in the order of C, C, and A to the tRNA nucleotide-73, using CTP and ATP as substrates and producing inorganic pyrophosphate. tRNA 3'-terminal CCA addition is required both for tRNA processing and repair. Also involved in tRNA surveillance by mediating tandem CCA addition to generate a CCACCA at the 3' terminus of unstable tRNAs. While stable tRNAs receive only 3'-terminal CCA, unstable tRNAs are marked with CCACCA and rapidly degraded. The protein is CCA-adding enzyme of Pediococcus pentosaceus (strain ATCC 25745 / CCUG 21536 / LMG 10740 / 183-1w).